The following is a 138-amino-acid chain: Large ribosomal subunit protein uL16 (138 aa).

Residues 1–13 show a composition bias toward basic residues; it reads MLQPSRRKYRKEQ. Residues 1-22 form a disordered region; sequence MLQPSRRKYRKEQKGRNTGLAT.

It belongs to the universal ribosomal protein uL16 family. As to quaternary structure, part of the 50S ribosomal subunit.

In terms of biological role, binds 23S rRNA and is also seen to make contacts with the A and possibly P site tRNAs. This Bordetella petrii (strain ATCC BAA-461 / DSM 12804 / CCUG 43448) protein is Large ribosomal subunit protein uL16.